A 142-amino-acid polypeptide reads, in one-letter code: uncharacterized protein (142 aa).

This is an uncharacterized protein from Caenorhabditis elegans.